The chain runs to 279 residues: NADPH-dependent 7-cyano-7-deazaguanine reductase (279 aa).

V86–S88 is a binding site for substrate. Position 88–89 (S88–K89) interacts with NADPH. The active-site Thioimide intermediate is the C187. Residue D194 is the Proton donor of the active site. Residue H226 to E227 coordinates substrate. NADPH is bound at residue R255–G256.

Belongs to the GTP cyclohydrolase I family. QueF type 2 subfamily. In terms of assembly, homodimer.

The protein localises to the cytoplasm. It catalyses the reaction 7-aminomethyl-7-carbaguanine + 2 NADP(+) = 7-cyano-7-deazaguanine + 2 NADPH + 3 H(+). The protein operates within tRNA modification; tRNA-queuosine biosynthesis. In terms of biological role, catalyzes the NADPH-dependent reduction of 7-cyano-7-deazaguanine (preQ0) to 7-aminomethyl-7-deazaguanine (preQ1). The protein is NADPH-dependent 7-cyano-7-deazaguanine reductase of Actinobacillus succinogenes (strain ATCC 55618 / DSM 22257 / CCUG 43843 / 130Z).